A 106-amino-acid polypeptide reads, in one-letter code: Large ribosomal subunit protein uL23 (106 aa).

Belongs to the universal ribosomal protein uL23 family. As to quaternary structure, part of the 50S ribosomal subunit. Contacts protein L29, and trigger factor when it is bound to the ribosome.

In terms of biological role, one of the early assembly proteins it binds 23S rRNA. One of the proteins that surrounds the polypeptide exit tunnel on the outside of the ribosome. Forms the main docking site for trigger factor binding to the ribosome. The chain is Large ribosomal subunit protein uL23 from Acinetobacter baumannii (strain SDF).